We begin with the raw amino-acid sequence, 130 residues long: Small ribosomal subunit protein uS8B (130 aa).

This sequence belongs to the universal ribosomal protein uS8 family. As to quaternary structure, component of the small ribosomal subunit (SSU). Mature yeast ribosomes consist of a small (40S) and a large (60S) subunit. The 40S small subunit contains 1 molecule of ribosomal RNA (18S rRNA) and 33 different proteins (encoded by 57 genes). The large 60S subunit contains 3 rRNA molecules (25S, 5.8S and 5S rRNA) and 46 different proteins (encoded by 81 genes).

The protein resides in the cytoplasm. In terms of biological role, component of the ribosome, a large ribonucleoprotein complex responsible for the synthesis of proteins in the cell. The small ribosomal subunit (SSU) binds messenger RNAs (mRNAs) and translates the encoded message by selecting cognate aminoacyl-transfer RNA (tRNA) molecules. The large subunit (LSU) contains the ribosomal catalytic site termed the peptidyl transferase center (PTC), which catalyzes the formation of peptide bonds, thereby polymerizing the amino acids delivered by tRNAs into a polypeptide chain. The nascent polypeptides leave the ribosome through a tunnel in the LSU and interact with protein factors that function in enzymatic processing, targeting, and the membrane insertion of nascent chains at the exit of the ribosomal tunnel. This is Small ribosomal subunit protein uS8B from Saccharomyces cerevisiae (strain ATCC 204508 / S288c) (Baker's yeast).